A 302-amino-acid chain; its full sequence is Mitochondrial glycine transporter (302 aa).

Solcar repeat units lie at residues 22 to 112 (HPVF…LKHH), 119 to 203 (PKPL…AKKL), and 213 to 297 (FSPV…MMEK). 6 consecutive transmembrane segments (helical) span residues 28-53 (FVCG…TRLQ), 87-113 (GVSP…KHHF), 125-150 (VMLG…TRYE), 178-201 (GLTA…TRAK), 217-243 (LNFG…KTHI), and 272-290 (GGLP…AWTV).

This sequence belongs to the mitochondrial carrier (TC 2.A.29) family. SLC25A38 subfamily.

It localises to the mitochondrion inner membrane. It carries out the reaction glycine(in) = glycine(out). Its function is as follows. Mitochondrial glycine transporter that imports glycine into the mitochondrial matrix. Plays an important role in providing glycine for the first enzymatic step in heme biosynthesis, the condensation of glycine with succinyl-CoA to produce 5-aminolevulinate (ALA) in the mitochondrial matrix. Required during erythropoiesis. In terms of biological role, may play a role as pro-apoptotic protein that induces caspase-dependent apoptosis. This Xenopus tropicalis (Western clawed frog) protein is Mitochondrial glycine transporter.